A 122-amino-acid polypeptide reads, in one-letter code: Large ribosomal subunit protein uL14 (122 aa).

Belongs to the universal ribosomal protein uL14 family. In terms of assembly, part of the 50S ribosomal subunit. Forms a cluster with proteins L3 and L19. In the 70S ribosome, L14 and L19 interact and together make contacts with the 16S rRNA in bridges B5 and B8.

Binds to 23S rRNA. Forms part of two intersubunit bridges in the 70S ribosome. The polypeptide is Large ribosomal subunit protein uL14 (Clostridioides difficile (strain 630) (Peptoclostridium difficile)).